Consider the following 1097-residue polypeptide: UPF0746 protein DDB_G0281095 (1097 aa).

Basic and acidic residues predominate over residues 1-11; the sequence is MVNNNKRKEIE. A disordered region spans residues 1–24; the sequence is MVNNNKRKEIENQENDNDDDNDGL. Acidic residues predominate over residues 12–22; it reads NQENDNDDDND. One can recognise an SAP domain in the interval 35–69; it reads YDSIRSKELQTIAKSLGLPNNGKKQEVYKRIEGYF. Positions 329 to 521 form a coiled coil; sequence FKEIREIHQQ…QLILELNEIQ (193 aa).

This sequence belongs to the UPF0746 family.

The chain is UPF0746 protein DDB_G0281095 from Dictyostelium discoideum (Social amoeba).